Consider the following 737-residue polypeptide: ATP-dependent RNA helicase SUV3, mitochondrial (737 aa).

The N-terminal 25 residues, 1–25, are a transit peptide targeting the mitochondrion; it reads MALVKYSTVFFPLRSLRLFVSIKKA. One can recognise a Helicase ATP-binding domain in the interval 226–365; the sequence is EARKIRRHII…KSVLPLVKSI (140 aa). 239 to 246 contributes to the ATP binding site; sequence GPTNSGKT. The 157-residue stretch at 390-546 folds into the Helicase C-terminal domain; the sequence is PIKDGIKGLR…YLKTAVTWPT (157 aa).

This sequence belongs to the helicase family. As to quaternary structure, MSU1 and SUV3 are the two components of the mitochondrial degradosome (mtEXO).

It localises to the mitochondrion matrix. The enzyme catalyses ATP + H2O = ADP + phosphate + H(+). In terms of biological role, required for intron-independent turnover and processing of mitochondrial RNA. It is a key control element in nuclear-mitochondrial interactions. The sequence is that of ATP-dependent RNA helicase SUV3, mitochondrial (SUV3) from Saccharomyces cerevisiae (strain ATCC 204508 / S288c) (Baker's yeast).